The sequence spans 275 residues: Light-independent protochlorophyllide reductase iron-sulfur ATP-binding protein (275 aa).

ATP is bound by residues 12–17 (GIGKST) and lysine 41. Serine 16 provides a ligand contact to Mg(2+). [4Fe-4S] cluster is bound by residues cysteine 97 and cysteine 131. An ATP-binding site is contributed by 182-183 (NR).

The protein belongs to the NifH/BchL/ChlL family. As to quaternary structure, homodimer. Protochlorophyllide reductase is composed of three subunits; BchL, BchN and BchB. It depends on [4Fe-4S] cluster as a cofactor.

The enzyme catalyses chlorophyllide a + oxidized 2[4Fe-4S]-[ferredoxin] + 2 ADP + 2 phosphate = protochlorophyllide a + reduced 2[4Fe-4S]-[ferredoxin] + 2 ATP + 2 H2O. It functions in the pathway porphyrin-containing compound metabolism; bacteriochlorophyll biosynthesis (light-independent). Functionally, component of the dark-operative protochlorophyllide reductase (DPOR) that uses Mg-ATP and reduced ferredoxin to reduce ring D of protochlorophyllide (Pchlide) to form chlorophyllide a (Chlide). This reaction is light-independent. The L component serves as a unique electron donor to the NB-component of the complex, and binds Mg-ATP. The polypeptide is Light-independent protochlorophyllide reductase iron-sulfur ATP-binding protein (Prosthecochloris aestuarii (strain DSM 271 / SK 413)).